The sequence spans 233 residues: 2,3,4,5-tetrahydropyridine-2,6-dicarboxylate N-acetyltransferase (233 aa).

It belongs to the transferase hexapeptide repeat family. DapH subfamily.

It catalyses the reaction (S)-2,3,4,5-tetrahydrodipicolinate + acetyl-CoA + H2O = L-2-acetamido-6-oxoheptanedioate + CoA. It participates in amino-acid biosynthesis; L-lysine biosynthesis via DAP pathway; LL-2,6-diaminopimelate from (S)-tetrahydrodipicolinate (acetylase route): step 1/3. Catalyzes the transfer of an acetyl group from acetyl-CoA to tetrahydrodipicolinate. This chain is 2,3,4,5-tetrahydropyridine-2,6-dicarboxylate N-acetyltransferase, found in Thermotoga sp. (strain RQ2).